Reading from the N-terminus, the 383-residue chain is Ribosomal RNA large subunit methyltransferase G (383 aa).

This sequence belongs to the methyltransferase superfamily. RlmG family.

It localises to the cytoplasm. The enzyme catalyses guanosine(1835) in 23S rRNA + S-adenosyl-L-methionine = N(2)-methylguanosine(1835) in 23S rRNA + S-adenosyl-L-homocysteine + H(+). In terms of biological role, specifically methylates the guanine in position 1835 (m2G1835) of 23S rRNA. This chain is Ribosomal RNA large subunit methyltransferase G, found in Shewanella amazonensis (strain ATCC BAA-1098 / SB2B).